The primary structure comprises 316 residues: Probable inactive poly [ADP-ribose] polymerase SRO4 (316 aa).

Residues 1 to 28 (MDYSKTEETPINEEQGSTNSSESRSNEE) form a disordered region. Low complexity predominate over residues 14–23 (EQGSTNSSES). The PARP catalytic domain maps to 28 to 255 (ELFSDCDQQH…KSPWISFPVL (228 aa)). The RST domain occupies 243 to 314 (KNPKSPWISF…IKSVGQKVHK (72 aa)).

It localises to the nucleus. In terms of biological role, probable inactive ADP-ribosyltransferase that may be involved in stress and developmental responses. The sequence is that of Probable inactive poly [ADP-ribose] polymerase SRO4 (SRO4) from Arabidopsis thaliana (Mouse-ear cress).